We begin with the raw amino-acid sequence, 319 residues long: 7,8-didemethyl-8-hydroxy-5-deazariboflavin synthase (319 aa).

The Radical SAM core domain maps to 5–236; that stretch reads VTYSPAYTIV…SNITLQIPPN (232 aa). [4Fe-4S] cluster contacts are provided by cysteine 19, cysteine 23, and cysteine 26.

This sequence belongs to the radical SAM superfamily. CofG family. Consists of two subunits, CofG and CofH. [4Fe-4S] cluster serves as cofactor.

The enzyme catalyses 5-amino-5-(4-hydroxybenzyl)-6-(D-ribitylimino)-5,6-dihydrouracil + S-adenosyl-L-methionine = 7,8-didemethyl-8-hydroxy-5-deazariboflavin + 5'-deoxyadenosine + L-methionine + NH4(+) + H(+). It functions in the pathway cofactor biosynthesis; coenzyme F0 biosynthesis. Catalyzes the radical-mediated synthesis of 7,8-didemethyl-8-hydroxy-5-deazariboflavin from 5-amino-5-(4-hydroxybenzyl)-6-(D-ribitylimino)-5,6-dihydrouracil. The polypeptide is 7,8-didemethyl-8-hydroxy-5-deazariboflavin synthase (Trichodesmium erythraeum (strain IMS101)).